Consider the following 242-residue polypeptide: uncharacterized protein (242 aa).

The region spanning 2-62 is the S4 RNA-binding domain; sequence EKAYKILSVQ…VEKPSVIFED (61 aa). D93 is a catalytic residue.

This sequence belongs to the pseudouridine synthase RluA family.

The enzyme catalyses a uridine in RNA = a pseudouridine in RNA. This is an uncharacterized protein from Helicobacter pylori (strain ATCC 700392 / 26695) (Campylobacter pylori).